A 123-amino-acid chain; its full sequence is Large ribosomal subunit protein uL14 (123 aa).

The protein belongs to the universal ribosomal protein uL14 family. As to quaternary structure, part of the 50S ribosomal subunit. Forms a cluster with proteins L3 and L19. In the 70S ribosome, L14 and L19 interact and together make contacts with the 16S rRNA in bridges B5 and B8.

Its function is as follows. Binds to 23S rRNA. Forms part of two intersubunit bridges in the 70S ribosome. The chain is Large ribosomal subunit protein uL14 from Buchnera aphidicola subsp. Acyrthosiphon kondoi (Acyrthosiphon kondoi symbiotic bacterium).